Here is a 98-residue protein sequence, read N- to C-terminus: NADH-ubiquinone oxidoreductase chain 4L (98 aa).

3 helical membrane-spanning segments follow: residues methionine 1 to isoleucine 21, serine 29 to leucine 49, and isoleucine 58 to leucine 78.

Belongs to the complex I subunit 4L family. In terms of assembly, core subunit of respiratory chain NADH dehydrogenase (Complex I) which is composed of 45 different subunits.

It localises to the mitochondrion inner membrane. It carries out the reaction a ubiquinone + NADH + 5 H(+)(in) = a ubiquinol + NAD(+) + 4 H(+)(out). Functionally, core subunit of the mitochondrial membrane respiratory chain NADH dehydrogenase (Complex I) which catalyzes electron transfer from NADH through the respiratory chain, using ubiquinone as an electron acceptor. Part of the enzyme membrane arm which is embedded in the lipid bilayer and involved in proton translocation. This chain is NADH-ubiquinone oxidoreductase chain 4L (MT-ND4L), found in Semnopithecus entellus (Northern plains gray langur).